The following is a 734-amino-acid chain: Polyribonucleotide nucleotidyltransferase (734 aa).

Mg(2+)-binding residues include aspartate 503 and aspartate 509. The KH domain maps to 570 to 629 (PKLSTIQVPVDAIGMIIGKGGETIRSITEETGAQINVDDDGTVTISSPNGESAAAAIETI). The 75-residue stretch at 639-713 (GTIYMGKVKD…GKIRYALSIK (75 aa)) folds into the S1 motif domain.

This sequence belongs to the polyribonucleotide nucleotidyltransferase family. Mg(2+) serves as cofactor.

It is found in the cytoplasm. The enzyme catalyses RNA(n+1) + phosphate = RNA(n) + a ribonucleoside 5'-diphosphate. Involved in mRNA degradation. Catalyzes the phosphorolysis of single-stranded polyribonucleotides processively in the 3'- to 5'-direction. The protein is Polyribonucleotide nucleotidyltransferase of Chlorobium phaeobacteroides (strain BS1).